The primary structure comprises 338 residues: Ketol-acid reductoisomerase (NADP(+)) (338 aa).

In terms of domain architecture, KARI N-terminal Rossmann spans 1 to 181 (MKVYYDKDAD…GGTKGGVIET (181 aa)). Residues 24-27 (YGSQ), Arg-47, Ser-52, and 82-85 (DESQ) contribute to the NADP(+) site. The active site involves His-107. Gly-133 contacts NADP(+). Residues 182 to 327 (NFREETETDL…AELRAMMPWI (146 aa)) form the KARI C-terminal knotted domain. Residues Asp-190, Glu-194, Glu-226, and Glu-230 each coordinate Mg(2+). Substrate is bound at residue Ser-251.

This sequence belongs to the ketol-acid reductoisomerase family. The cofactor is Mg(2+).

The catalysed reaction is (2R)-2,3-dihydroxy-3-methylbutanoate + NADP(+) = (2S)-2-acetolactate + NADPH + H(+). The enzyme catalyses (2R,3R)-2,3-dihydroxy-3-methylpentanoate + NADP(+) = (S)-2-ethyl-2-hydroxy-3-oxobutanoate + NADPH + H(+). It participates in amino-acid biosynthesis; L-isoleucine biosynthesis; L-isoleucine from 2-oxobutanoate: step 2/4. Its pathway is amino-acid biosynthesis; L-valine biosynthesis; L-valine from pyruvate: step 2/4. In terms of biological role, involved in the biosynthesis of branched-chain amino acids (BCAA). Catalyzes an alkyl-migration followed by a ketol-acid reduction of (S)-2-acetolactate (S2AL) to yield (R)-2,3-dihydroxy-isovalerate. In the isomerase reaction, S2AL is rearranged via a Mg-dependent methyl migration to produce 3-hydroxy-3-methyl-2-ketobutyrate (HMKB). In the reductase reaction, this 2-ketoacid undergoes a metal-dependent reduction by NADPH to yield (R)-2,3-dihydroxy-isovalerate. This chain is Ketol-acid reductoisomerase (NADP(+)), found in Chromobacterium violaceum (strain ATCC 12472 / DSM 30191 / JCM 1249 / CCUG 213 / NBRC 12614 / NCIMB 9131 / NCTC 9757 / MK).